The sequence spans 353 residues: Peptide-N(4)-(N-acetyl-beta-glucosaminyl)asparagine amidase (353 aa).

Positions 125, 128, and 159 each coordinate Zn(2+). Residue Cys185 is the Nucleophile of the active site. Residues His212 and Asp229 contribute to the active site. Position 232 (Glu232) interacts with substrate. Positions 316–353 (SLEKTKPSKDTSTTTLTGTKGRESGSTAWKQQRGEDGS) are disordered. The span at 325-334 (DTSTTTLTGT) shows a compositional bias: low complexity.

Belongs to the transglutaminase-like superfamily. PNGase family. It depends on Zn(2+) as a cofactor.

It localises to the cytoplasm. The enzyme catalyses Hydrolysis of an N(4)-(acetyl-beta-D-glucosaminyl)asparagine residue in which the glucosamine residue may be further glycosylated, to yield a (substituted) N-acetyl-beta-D-glucosaminylamine and a peptide containing an aspartate residue.. Its function is as follows. Specifically deglycosylates the denatured form of N-linked glycoproteins in the cytoplasm and assists their proteasome-mediated degradation. Cleaves the beta-aspartyl-glucosamine (GlcNAc) of the glycan and the amide side chain of Asn, converting Asn to Asp. Prefers proteins containing high-mannose over those bearing complex type oligosaccharides. Can recognize misfolded proteins in the endoplasmic reticulum that are exported to the cytosol to be destroyed and deglycosylate them, while it has no activity toward native proteins. Deglycosylation is a prerequisite for subsequent proteasome-mediated degradation of some, but not all, misfolded glycoproteins. In Kluyveromyces lactis (strain ATCC 8585 / CBS 2359 / DSM 70799 / NBRC 1267 / NRRL Y-1140 / WM37) (Yeast), this protein is Peptide-N(4)-(N-acetyl-beta-glucosaminyl)asparagine amidase (PNG1).